We begin with the raw amino-acid sequence, 634 residues long: MSVASTAAPFHTTSGSSGAISTFSVVDYVVFGLLLVLSLVIGLYHACRGWGHHTVGELLMADRKMGCLPVALSLLATFQSAVAILGAPAEIFRFGTQYWFLGCSYFLGLLIPAHIFIPVFYRLHLTSAYEYLELRFNKAVRICGTVTFIFQMVIYMGVALYAPSLALNAVTGFDLWLSVLALGIVCNIYTALGGLKAVIWTDVFQTLVMFLGQLVVIIVGAARVGGLGHVWNVTSQHGLISGINLDPDPFVRHTFWTLAFGGVFMMLSLYGVNQAQVQRYLSSHSERAAVLSCYAVFPCQQVALCMSCLIGLVMFAYYNMYSMSPELKQAAPDQLVLYFVMDLLKDMPGLPGLFVACLFSGSLSTISSAFNSLATVTMEDLIQPWFPQLTETRAIMLSRGLAFAYGLVCLGMAYISSHLGSVLQAALSIFGMVGGPLLGLFCLGLFFPCANPLGAIVGLLTGLTMAFWIGIGSIVSRMSSAVAPPPLNGSSSFLPANVTVAAVTTVMPSTLSKPTGLQHFYSLSYLWYSAHNSTTVIVVGLIVSLLTGGMRGRSLNPGTIYPVLPKLLALLPLSCQKRLCWRSHSQDIPVIPNLFPEKMRNGVLQDSTDKERMAEDGLVHQPCSPTYVVQETSL.

Transmembrane regions (helical) follow at residues 23-43 (FSVV…VIGL), 65-85 (MGCL…VAIL), 100-120 (FLGC…IPVF), 142-162 (ICGT…ALYA), 175-195 (LWLS…LGGL), 207-227 (LVMF…VGGL), 255-275 (FWTL…VNQA), 295-315 (AVFP…LVMF), 350-370 (LPGL…SSAF), 403-423 (FAYG…GSVL), 427-447 (LSIF…GLFF), and 455-475 (AIVG…GSIV). N-linked (GlcNAc...) asparagine glycans are attached at residues asparagine 488 and asparagine 497. Residues 526–546 (LWYSAHNSTTVIVVGLIVSLL) traverse the membrane as a helical segment.

Belongs to the sodium:solute symporter (SSF) (TC 2.A.21) family. As to quaternary structure, interacts with PDZD11. As to expression, expressed in the intestinal mucosa, liver and kidney (at protein level). Expressed in the colon.

It localises to the cell membrane. The protein resides in the apical cell membrane. It catalyses the reaction biotin(out) + 2 Na(+)(out) = biotin(in) + 2 Na(+)(in). The catalysed reaction is (R)-pantothenate(out) + 2 Na(+)(out) = (R)-pantothenate(in) + 2 Na(+)(in). It carries out the reaction (R)-lipoate(out) + 2 Na(+)(out) = (R)-lipoate(in) + 2 Na(+)(in). The enzyme catalyses iodide(out) + 2 Na(+)(out) = iodide(in) + 2 Na(+)(in). Its function is as follows. Sodium-dependent multivitamin transporter that mediates the electrogenic transport of pantothenate, biotin, lipoate and iodide. Functions as a Na(+)-coupled substrate symporter where the stoichiometry of Na(+):substrate is 2:1, creating an electrochemical Na(+) gradient used as driving force for substrate uptake. Required for biotin and pantothenate uptake in the intestine across the brush border membrane. Plays a role in the maintenance of intestinal mucosa integrity, by providing the gut mucosa with biotin. Contributes to the luminal uptake of biotin and pantothenate into the brain across the blood-brain barrier. This Mus musculus (Mouse) protein is Sodium-dependent multivitamin transporter.